The chain runs to 236 residues: Venom metalloproteinase antarease-like TfasMP_A (236 aa).

One can recognise a Peptidase M12B domain in the interval Ile-4–Gln-232. His-161 is a binding site for Zn(2+). Residue Glu-162 is part of the active site. Positions 165 and 171 each coordinate Zn(2+).

Belongs to the venom metalloproteinase (M12B) family. Zn(2+) serves as cofactor. In terms of processing, contains several disulfide bonds. Expressed by the venom gland.

It localises to the secreted. Inhibited by EDTA. Its function is as follows. Acts as a metalloprotease. Penetrates intact tissue and specifically cleaves the vesicle-associated membrane protein 2 (VAMP2) (part of the SNARE complex) involved in pancreatic secretion, thus disrupting the normal vesicular traffic. In Tityus fasciolatus (Central Brazilian scorpion), this protein is Venom metalloproteinase antarease-like TfasMP_A.